A 500-amino-acid polypeptide reads, in one-letter code: MSSIEEIDTDETFTSDYVSARKDEVDDIITATTIAQKKMENSILEKLNSTENGNIIEKKKILNFLMNGIEKIPMSHQGLDSSKVWISFWILNGMDMLDSLDSYPNISSRASKYLSILQNDDNNGNNNNRENNQNGGGFGGGNSHTSHVVSTFAAVSALYVIGTEESYKTIDREAMYKFLMRMKTKEGAFTSEDGGEYDSRTTYCAIAVASMLNILTAELERGVVDFLLSCQTYEGGFGAYPFNEAHGGYTFCSVAALSILNSLHKIDMNSLHRWITYRQSNDGGFEGRTNKLVDTCYSYWQGAVYIIIQSYFNYYKKQQQDDGDGKEGDQQEEGLLFNQAKLQEYVIRFCQQSDKKYSGFSDHPHRGKDYYHTCYGLSGISLSQYNEIGKAIQSLNTFTNTFEQPSPPINKKSTNVFTISNNNNNNNNKNNNSDDNNNNSNNNNNNSENQLVEPVHPIYNIKLSKCEKGFEIDLFLFQKEFKDASVSLGTLFFYAKFILK.

Residues Leu-117–Gly-140 are disordered. The span at Asn-119 to Gln-133 shows a compositional bias: low complexity. 5 PFTB repeats span residues Asp-121–Gly-162, Arg-172–Asn-213, Glu-220–Asn-261, Met-268–Gln-309, and Gln-343–Gln-384. Residues His-246–Tyr-249 and Arg-288–Lys-291 contribute to the (2E,6E)-farnesyl diphosphate site. Asp-294 and Cys-296 together coordinate Zn(2+). (2E,6E)-farnesyl diphosphate is bound at residue Tyr-297–Trp-300. His-372 is a binding site for Zn(2+). The disordered stretch occupies residues Phe-402–Leu-451. The span at Ser-420–Asn-449 shows a compositional bias: low complexity.

This sequence belongs to the protein prenyltransferase subunit beta family. In terms of assembly, heterodimer of fntA and fntB (farnesyltransferase). Heterodimer of an alpha and a beta subunit. Requires Zn(2+) as cofactor.

It catalyses the reaction L-cysteinyl-[protein] + (2E,6E)-farnesyl diphosphate = S-(2E,6E)-farnesyl-L-cysteinyl-[protein] + diphosphate. Catalyzes the transfer of a farnesyl moiety from farnesyl diphosphate to a cysteine at the fourth position from the C-terminus of several proteins. The beta subunit is responsible for peptide-binding. The chain is Protein farnesyltransferase subunit beta (fntB) from Dictyostelium discoideum (Social amoeba).